The primary structure comprises 71 residues: Exodeoxyribonuclease 7 small subunit (71 aa).

Belongs to the XseB family. Heterooligomer composed of large and small subunits.

It is found in the cytoplasm. It catalyses the reaction Exonucleolytic cleavage in either 5'- to 3'- or 3'- to 5'-direction to yield nucleoside 5'-phosphates.. Bidirectionally degrades single-stranded DNA into large acid-insoluble oligonucleotides, which are then degraded further into small acid-soluble oligonucleotides. This chain is Exodeoxyribonuclease 7 small subunit, found in Clostridium botulinum (strain ATCC 19397 / Type A).